Reading from the N-terminus, the 352-residue chain is S-adenosylmethionine:tRNA ribosyltransferase-isomerase (352 aa).

This sequence belongs to the QueA family. In terms of assembly, monomer.

The protein localises to the cytoplasm. The catalysed reaction is 7-aminomethyl-7-carbaguanosine(34) in tRNA + S-adenosyl-L-methionine = epoxyqueuosine(34) in tRNA + adenine + L-methionine + 2 H(+). It functions in the pathway tRNA modification; tRNA-queuosine biosynthesis. In terms of biological role, transfers and isomerizes the ribose moiety from AdoMet to the 7-aminomethyl group of 7-deazaguanine (preQ1-tRNA) to give epoxyqueuosine (oQ-tRNA). This is S-adenosylmethionine:tRNA ribosyltransferase-isomerase from Vibrio cholerae serotype O1 (strain ATCC 39315 / El Tor Inaba N16961).